The chain runs to 63 residues: Crotasin (63 aa).

A signal peptide spans 1–22; it reads MKILYLLSAFLFLAFLSESGNA. 3 cysteine pairs are disulfide-bonded: C26–C56, C33–C50, and C38–C57.

As to expression, highly expressed in pancreas, heart, liver, brain and kidney. Expressed to a low extent in the venom gland.

The protein resides in the secreted. The protein is Crotasin of Crotalus durissus terrificus (South American rattlesnake).